We begin with the raw amino-acid sequence, 872 residues long: uncharacterized protein (872 aa).

The stretch at 496-524 (LQQHHQDISAMQQQILEEKNQLRRATIDV) forms a coiled coil. 2 disordered regions span residues 595 to 736 (RPAV…SVQQ) and 844 to 872 (TKEN…PQAV). Polar residues-rich tracts occupy residues 615-659 (QNGN…QTTF) and 670-686 (PYAS…NNVV). The segment covering 687 to 736 (QQYQSYYDNPSNQQSNQQSNQQSNQQPNQQPNQQPNQQPNQQPNQQSVQQ) has biased composition (low complexity).

The protein localises to the virion. This is an uncharacterized protein from Acanthamoeba polyphaga mimivirus (APMV).